The following is a 175-amino-acid chain: Ribosome maturation factor RimM (175 aa).

The region spanning 96–175 (EEDYYWHDLI…TITVDWDAGF (80 aa)) is the PRC barrel domain.

The protein belongs to the RimM family. In terms of assembly, binds ribosomal protein uS19.

It is found in the cytoplasm. Functionally, an accessory protein needed during the final step in the assembly of 30S ribosomal subunit, possibly for assembly of the head region. Essential for efficient processing of 16S rRNA. May be needed both before and after RbfA during the maturation of 16S rRNA. It has affinity for free ribosomal 30S subunits but not for 70S ribosomes. This Haemophilus ducreyi (strain 35000HP / ATCC 700724) protein is Ribosome maturation factor RimM.